We begin with the raw amino-acid sequence, 296 residues long: Protein csh3 (296 aa).

The segment at 46 to 138 (ASPVTAPAAQ…PPSYPGPNTA (93 aa)) is disordered. Basic and acidic residues predominate over residues 93 to 103 (GEKRTPEEPRK). Residues 111 to 124 (QKQSEASSVNSSTE) show a composition bias toward polar residues. Residues 140–199 (KNVERVLAMYDFPGPDAGDLGFHAGEVIIVLEHVNNDWWRGELNGKEGIFPSNYVRLLED) enclose the SH3 domain. Residues 202-246 (VKAQPPPPPPQQNYPPAASSSAPPMQYQQTAYPPQQAPYPPVQAY) are disordered. The segment covering 205–214 (QPPPPPPQQN) has biased composition (pro residues). Residues 215–235 (YPPAASSSAPPMQYQQTAYPP) show a composition bias toward low complexity.

The sequence is that of Protein csh3 (csh3) from Schizosaccharomyces pombe (strain 972 / ATCC 24843) (Fission yeast).